We begin with the raw amino-acid sequence, 368 residues long: Probable endopolygalacturonase I (368 aa).

The N-terminal stretch at 1-18 (MHSFQLLGLAALGSLVAA) is a signal peptide. Positions 19 to 31 (APSPSRVSDLTER) are excised as a propeptide. Cysteine 35 and cysteine 50 are disulfide-bonded. 6 PbH1 repeats span residues 162-192 (ANNLHLTDITIDNSDGDSKGGHNTDGFDISE), 193-214 (SNGVYISGANVKNQDDCIAINS), 215-235 (GKNIEFTGGTCSGGHGLSIGS), 244-265 (VQGVKITDSTVTNSDNGIRIKT), 273-295 (VSDVTYSNIKLSGIHKKGIVIQQ), and 307-328 (SNGIPIKDVTVDGITGSVDSKA). The active-site Proton donor is the aspartate 207. Cysteine 209 and cysteine 225 are disulfide-bonded. Histidine 229 is a catalytic residue. 2 disulfide bridges follow: cysteine 335–cysteine 340 and cysteine 359–cysteine 368.

This sequence belongs to the glycosyl hydrolase 28 family.

It localises to the secreted. It carries out the reaction (1,4-alpha-D-galacturonosyl)n+m + H2O = (1,4-alpha-D-galacturonosyl)n + (1,4-alpha-D-galacturonosyl)m.. Involved in maceration and soft-rotting of plant tissue. Hydrolyzes the 1,4-alpha glycosidic bonds of de-esterified pectate in the smooth region of the plant cell wall. This chain is Probable endopolygalacturonase I (pgaI), found in Aspergillus terreus (strain NIH 2624 / FGSC A1156).